A 457-amino-acid polypeptide reads, in one-letter code: Cysteine--tRNA ligase (457 aa).

Residue Cys30 participates in Zn(2+) binding. The short motif at 32-42 is the 'HIGH' region element; that stretch reads PTVYDRAHLGN. Residues Cys213, His238, and Glu242 each coordinate Zn(2+). The short motif at 271-275 is the 'KMSKS' region element; it reads KMSKS. Residue Lys274 coordinates ATP.

It belongs to the class-I aminoacyl-tRNA synthetase family. In terms of assembly, monomer. Requires Zn(2+) as cofactor.

The protein localises to the cytoplasm. It carries out the reaction tRNA(Cys) + L-cysteine + ATP = L-cysteinyl-tRNA(Cys) + AMP + diphosphate. The chain is Cysteine--tRNA ligase from Ruegeria sp. (strain TM1040) (Silicibacter sp.).